We begin with the raw amino-acid sequence, 302 residues long: tRNA pseudouridine synthase B (302 aa).

D45 (nucleophile) is an active-site residue.

The protein belongs to the pseudouridine synthase TruB family. Type 1 subfamily.

It carries out the reaction uridine(55) in tRNA = pseudouridine(55) in tRNA. In terms of biological role, responsible for synthesis of pseudouridine from uracil-55 in the psi GC loop of transfer RNAs. The chain is tRNA pseudouridine synthase B from Francisella tularensis subsp. novicida (strain U112).